The sequence spans 256 residues: PHD finger protein ALFIN-LIKE 4 (256 aa).

The segment at 149 to 195 is disordered; sequence QSKTANGSSKNKSGSKPPKRPNSDSKPQKQVQAKYEEENGGRGNGGD. Over residues 154–164 the composition is skewed to low complexity; that stretch reads NGSSKNKSGSK. The segment at 200 to 252 adopts a PHD-type zinc-finger fold; sequence ETICGACGEAYANGEFWICCDICETWFHGKCVRITPAKAEHIKHYKCPGCSNK.

Belongs to the Alfin family. Interacts with H3K4me3 and to a lesser extent with H3K4me2.

It localises to the nucleus. Functionally, histone-binding component that specifically recognizes H3 tails trimethylated on 'Lys-4' (H3K4me3), which mark transcription start sites of virtually all active genes. The sequence is that of PHD finger protein ALFIN-LIKE 4 from Oryza sativa subsp. indica (Rice).